The following is a 1185-amino-acid chain: Chromosome partition protein Smc (1185 aa).

ATP is bound at residue 34–41 (PNGSGKSN). Coiled-coil stretches lie at residues 174 to 376 (WRRS…EKDI) and 412 to 526 (ENIV…KLDV). The region spanning 534-644 (VGEIISLQKK…CENIDNAFEI (111 aa)) is the SMC hinge domain. The stretch at 679–1039 (NIIGRKREIE…IDAMTEKMKG (361 aa)) forms a coiled coil.

Belongs to the SMC family. Homodimer.

It is found in the cytoplasm. Functionally, required for chromosome condensation and partitioning. In Clostridium kluyveri (strain NBRC 12016), this protein is Chromosome partition protein Smc.